The chain runs to 172 residues: 3-hydroxydecanoyl-[acyl-carrier-protein] dehydratase (172 aa).

Histidine 71 is a catalytic residue.

It belongs to the thioester dehydratase family. FabA subfamily. As to quaternary structure, homodimer.

The protein localises to the cytoplasm. The catalysed reaction is a (3R)-hydroxyacyl-[ACP] = a (2E)-enoyl-[ACP] + H2O. The enzyme catalyses (3R)-hydroxydecanoyl-[ACP] = (2E)-decenoyl-[ACP] + H2O. It catalyses the reaction (2E)-decenoyl-[ACP] = (3Z)-decenoyl-[ACP]. It participates in lipid metabolism; fatty acid biosynthesis. Necessary for the introduction of cis unsaturation into fatty acids. Catalyzes the dehydration of (3R)-3-hydroxydecanoyl-ACP to E-(2)-decenoyl-ACP and then its isomerization to Z-(3)-decenoyl-ACP. Can catalyze the dehydratase reaction for beta-hydroxyacyl-ACPs with saturated chain lengths up to 16:0, being most active on intermediate chain length. This is 3-hydroxydecanoyl-[acyl-carrier-protein] dehydratase from Photorhabdus laumondii subsp. laumondii (strain DSM 15139 / CIP 105565 / TT01) (Photorhabdus luminescens subsp. laumondii).